Reading from the N-terminus, the 363-residue chain is MTQVYNFCAGPAMLPVEVLRRAEQELCNWHGLGTSVMEISHRGEAFMQVAAEAEQDLRDLLKVPADYRILFCHGGARGQFAAVPLNLLGSERTARADYAVGGYWAQSAAKEAQRYCNPHAIDIAQRVDGKLSMKPMAQWDLLEESAYLHYCPNETIDGVTIDEEPDFGDRVVVADMSSTILSRPIDVSRYGLIYAGAQKNVGPAGITLVIVREDLLGRARREIPSILDYQVLVESDSMFNTPPTFAWYLSGMVFKWLKEQGGVSEMARRNQAKADLLYQAIDGGEFYRNDVAPANRSRMNVPFQMVDSALDPLFWDEARKAGLHALKGHKVAGGMRASIYNAMPLAGVQALVAFMADFARRHG.

An L-glutamate-binding site is contributed by arginine 42. Pyridoxal 5'-phosphate-binding positions include 76-77 (AR), tryptophan 104, threonine 155, aspartate 175, and glutamine 198. An N6-(pyridoxal phosphate)lysine modification is found at lysine 199. Position 240–241 (240–241 (NT)) interacts with pyridoxal 5'-phosphate.

Belongs to the class-V pyridoxal-phosphate-dependent aminotransferase family. SerC subfamily. In terms of assembly, homodimer. The cofactor is pyridoxal 5'-phosphate.

It localises to the cytoplasm. The catalysed reaction is O-phospho-L-serine + 2-oxoglutarate = 3-phosphooxypyruvate + L-glutamate. It catalyses the reaction 4-(phosphooxy)-L-threonine + 2-oxoglutarate = (R)-3-hydroxy-2-oxo-4-phosphooxybutanoate + L-glutamate. It participates in amino-acid biosynthesis; L-serine biosynthesis; L-serine from 3-phospho-D-glycerate: step 2/3. The protein operates within cofactor biosynthesis; pyridoxine 5'-phosphate biosynthesis; pyridoxine 5'-phosphate from D-erythrose 4-phosphate: step 3/5. Its function is as follows. Catalyzes the reversible conversion of 3-phosphohydroxypyruvate to phosphoserine and of 3-hydroxy-2-oxo-4-phosphonooxybutanoate to phosphohydroxythreonine. The chain is Phosphoserine aminotransferase (serC) from Edwardsiella ictaluri (strain 93-146).